The following is a 556-amino-acid chain: Glucose-6-phosphate isomerase (556 aa).

Residue Glu-360 is the Proton donor of the active site. Catalysis depends on residues His-391 and Lys-519.

Belongs to the GPI family.

It is found in the cytoplasm. The catalysed reaction is alpha-D-glucose 6-phosphate = beta-D-fructose 6-phosphate. The protein operates within carbohydrate biosynthesis; gluconeogenesis. Its pathway is carbohydrate degradation; glycolysis; D-glyceraldehyde 3-phosphate and glycerone phosphate from D-glucose: step 2/4. Its function is as follows. Catalyzes the reversible isomerization of glucose-6-phosphate to fructose-6-phosphate. The chain is Glucose-6-phosphate isomerase from Acinetobacter baumannii (strain SDF).